The chain runs to 315 residues: Methionyl-tRNA formyltransferase (315 aa).

(6S)-5,6,7,8-tetrahydrofolate is bound at residue 113-116; that stretch reads SLLP.

It belongs to the Fmt family.

It catalyses the reaction L-methionyl-tRNA(fMet) + (6R)-10-formyltetrahydrofolate = N-formyl-L-methionyl-tRNA(fMet) + (6S)-5,6,7,8-tetrahydrofolate + H(+). In terms of biological role, attaches a formyl group to the free amino group of methionyl-tRNA(fMet). The formyl group appears to play a dual role in the initiator identity of N-formylmethionyl-tRNA by promoting its recognition by IF2 and preventing the misappropriation of this tRNA by the elongation apparatus. The sequence is that of Methionyl-tRNA formyltransferase from Shigella boydii serotype 18 (strain CDC 3083-94 / BS512).